The primary structure comprises 465 residues: MSFLWDIMPIDKHLSTVPETEGCQQRIETRICALPDDLLLQILPHVPTKEAVATSILSKQWRYVWLMLPKLEFKDEGSESVGWFIKKSLQLHKAPKLDCLIVELGPHCPIDVDVRKWVENAVNRDVKDLDFTLLWSAAPTSFPKSLYTCDTLVCLTLSNQILVDVSSPASLPSLLDLSLHYVVYKDDGSLVRLLSSSPVLKRLSVHSHEDDNLKTFTVKVSSLESLNYDENWLKDEVEDNEVDEVVDNEVEVDDLNGSLVIDSPALKELHLSEVWDYCLIENMSFLDEAFISNVPYPDEKFLRSLSSVKHLFLLFSKSMVACCNAIKFSWLIEFYFFPISLVDWLMPLMFLLQNSPKLKTPTIDNDFECLSLSWNQPSSIPGCLLSHLETFRWRGYGGREDAKKLLMTYILANSKCLKTVEISLLATCNLEETQKELKSMPRISQSSQLLISTKKLWRINERTYL.

Residues 28-74 enclose the F-box domain; that stretch reads ETRICALPDDLLLQILPHVPTKEAVATSILSKQWRYVWLMLPKLEFK. LRR repeat units lie at residues 154–181, 182–207, 210–230, 248–273, and 339–365; these read CLTL…SLHY, VVYK…SVHS, DDNL…NYDE, NEVE…HLSE, and ISLV…TIDN. Residues 373–424 enclose the FBD domain; the sequence is SWNQPSSIPGCLLSHLETFRWRGYGGREDAKKLLMTYILANSKCLKTVEISL.

The chain is Putative F-box/FBD/LRR-repeat protein At1g22000 from Arabidopsis thaliana (Mouse-ear cress).